The following is a 147-amino-acid chain: Cyclic di-AMP receptor B (147 aa).

Residues 18 to 78 (MIEADKVAHV…SIFGLERIEF (61 aa)) form the CBS domain. Lys-23, Ala-25, Thr-46, Ala-47, and Arg-131 together coordinate 3',3'-c-di-AMP.

Homodimer. Forms a homodimer with a parallel, head-to-head assembly of the monomers. Under conditions of potassium starvation and corresponding low c-di-AMP levels, apo-DarB specifically interacts with the N-terminal region of the RelA. Under the same conditions, apo-DarB also specifically interacts with the C-terminal part of the pyruvate carboxylase.

Binds c-di-AMP. Binding of c-di-AMP to DarB inhibits the interaction with RelA and PYC. In terms of biological role, involved in the c-di-AMP-dependent regulation of the bacterial stringent response. Modulates the activities of at least two enzymes under conditions of potassium limitation. Apo-DarB regulates the activity of the GTP pyrophosphokinase RelA by interacting directly with RelA, leading to stimulation of (p)ppGpp synthesis and induction of the stringent response. Apo-DarB also regulates pyruvate carboxylase (PYC) at two levels: directly at the protein level by binding to the enzyme and stimulating the synthesis of oxaloacetate and indirectly, by interaction with RelA, which leads to activation of the stringent response and to the increased expression of the pycA gene. Stimulation of these enzymes by DarB is prevented in the presence of cyclic di-AMP (c-di-AMP). This Bacillus subtilis (strain 168) protein is Cyclic di-AMP receptor B.